The chain runs to 139 residues: Non-structural protein 1 (139 aa).

The DLNP; interaction with MAP1B signature appears at 136–139 (DLNS).

This sequence belongs to the pneumovirus non-structural protein 1 family. As to quaternary structure, monomer. Homomultimer. Heteromultimer with NS2. Interacts with the matrix protein M. Interacts with host ELOC and CUL2; this interaction allows NS1 to form an active E3 ligase with ELOC and CUL2. Interacts with host IRF3; this interaction leads to the disrupted association of IRF3 with CREBBP and thus reduced binding of IRF3 to the IFN-beta promoter. Interacts with host MAVS; this interaction prevents MAVS binding to RIGI and inhibits signaling pathway leading to interferon production. Interacts with host MAP1B/microtubule-associated protein 1B. Interacts with host TRIM25 (via SPRY domain); this interaction suppresses RIGI ubiquitination and results in decreased interaction between RIGI and MAVS.

Its subcellular location is the host cytoplasm. The protein resides in the host mitochondrion. The protein localises to the host nucleus. Its function is as follows. Plays a major role in antagonizing the type I IFN-mediated antiviral response by degrading or inhibiting multiple cellular factors required for either IFN induction or response pathways. Acts cooperatively with NS2 to repress activation and nuclear translocation of host IFN-regulatory factor IRF3. Also disrupts the association of IRF3 with CREBBP. Interacts with host mitochondrial-associated membrane (MAM) MAVS and prevents the interaction with RIGI. Interacts with TRIM25 to suppress TRIM25-mediated RIGI ubiquitination and thereby RIGI-MAVS interaction. Together with NS2, participates in the proteasomal degradation of host STAT2, IRF3, IRF7, TBK1 and RIGI through a NS-degradasome involving CUL2 and Elongin-C. The degradasome requires an intact mitochondrial MAVS. Decreases the levels of host TRAF3 and IKBKE/IKK-epsilon. As functions other than disruptions of the type I IFN-mediated antiviral signaling pathways, induces host SOCS1 and SOCS3 expression. Suppresses premature apoptosis by an NF-kappa-B-dependent, interferon-independent mechanism and thus facilitates virus growth. Additionally, NS1 may serve some inhibitory role in viral transcription and RNA replication. Suppresses proliferation and activation of host CD103+ CD8+ cytotoxic T-lymphocytes and Th17 helper T-lymphocytes. In Homo sapiens (Human), this protein is Non-structural protein 1 (1C).